We begin with the raw amino-acid sequence, 82 residues long: ATP synthase subunit c (82 aa).

2 helical membrane passes run 3 to 23 (PLIASASVLAAALAIGLASLG) and 57 to 77 (LAFMESLTIYGLVIALVLLFA).

In terms of assembly, F-type ATPases have 2 components, F(1) - the catalytic core - and F(0) - the membrane proton channel. F(1) has five subunits: alpha(3), beta(3), gamma(1), delta(1), epsilon(1). F(0) has four main subunits: a(1), b(1), b'(1) and c(10-14). The alpha and beta chains form an alternating ring which encloses part of the gamma chain. F(1) is attached to F(0) by a central stalk formed by the gamma and epsilon chains, while a peripheral stalk is formed by the delta, b and b' chains.

It is found in the cellular thylakoid membrane. Its activity is regulated as follows. Inhibited by dicyclohexylcarbodiimide. Functionally, f(1)F(0) ATP synthase produces ATP from ADP in the presence of a proton or sodium gradient. F-type ATPases consist of two structural domains, F(1) containing the extramembraneous catalytic core and F(0) containing the membrane proton channel, linked together by a central stalk and a peripheral stalk. During catalysis, ATP synthesis in the catalytic domain of F(1) is coupled via a rotary mechanism of the central stalk subunits to proton translocation. Its function is as follows. Key component of the F(0) channel; it plays a direct role in translocation across the membrane. A homomeric c-ring of between 10-14 subunits forms the central stalk rotor element with the F(1) delta and epsilon subunits. The complex from the organism is particularly stable to disruption and remains functional after 6 hrs at 55 degrees Celsius. This Thermosynechococcus vestitus (strain NIES-2133 / IAM M-273 / BP-1) protein is ATP synthase subunit c (atpE).